Here is a 673-residue protein sequence, read N- to C-terminus: Glycine--tRNA ligase beta subunit (673 aa).

It belongs to the class-II aminoacyl-tRNA synthetase family. In terms of assembly, tetramer of two alpha and two beta subunits.

It is found in the cytoplasm. It catalyses the reaction tRNA(Gly) + glycine + ATP = glycyl-tRNA(Gly) + AMP + diphosphate. The chain is Glycine--tRNA ligase beta subunit from Lactococcus lactis subsp. cremoris (strain MG1363).